We begin with the raw amino-acid sequence, 432 residues long: Adenylosuccinate synthetase (432 aa).

GTP-binding positions include 12 to 18 (GDEGKGK) and 40 to 42 (GHT). The active-site Proton acceptor is the aspartate 13. Aspartate 13 and glycine 40 together coordinate Mg(2+). IMP-binding positions include 13 to 16 (DEGK), 38 to 41 (NAGH), threonine 129, arginine 143, glutamine 224, threonine 239, and arginine 303. The active-site Proton donor is histidine 41. 299–305 (VTTGRRR) is a substrate binding site. GTP-binding positions include arginine 305, 331–333 (KLD), and 413–415 (GVG).

The protein belongs to the adenylosuccinate synthetase family. As to quaternary structure, homodimer. It depends on Mg(2+) as a cofactor.

It is found in the cytoplasm. The catalysed reaction is IMP + L-aspartate + GTP = N(6)-(1,2-dicarboxyethyl)-AMP + GDP + phosphate + 2 H(+). The protein operates within purine metabolism; AMP biosynthesis via de novo pathway; AMP from IMP: step 1/2. Functionally, plays an important role in the de novo pathway of purine nucleotide biosynthesis. Catalyzes the first committed step in the biosynthesis of AMP from IMP. In Mycolicibacterium paratuberculosis (strain ATCC BAA-968 / K-10) (Mycobacterium paratuberculosis), this protein is Adenylosuccinate synthetase.